Consider the following 145-residue polypeptide: Eukaryotic translation initiation factor 1A (145 aa).

Over residues 1–15 the composition is skewed to basic residues; sequence MPKNKGKGGKNRKRG. A disordered region spans residues 1 to 25; sequence MPKNKGKGGKNRKRGKNEADDDKRE. A compositionally biased stretch (basic and acidic residues) spans 16-25; the sequence is KNEADDDKRE. Positions 22 to 96 constitute an S1-like domain; it reads DKRELVFKED…DKADVILKLM (75 aa).

Belongs to the eIF-1A family.

Its function is as follows. Seems to be required for maximal rate of protein biosynthesis. Enhances ribosome dissociation into subunits and stabilizes the binding of the initiator Met-tRNA(I) to 40 S ribosomal subunits. The polypeptide is Eukaryotic translation initiation factor 1A (Onobrychis viciifolia (Common sainfoin)).